A 232-amino-acid chain; its full sequence is Ureidoacrylate amidohydrolase RutB (232 aa).

The Proton acceptor role is filled by Asp-26. Residue Lys-135 is part of the active site. Catalysis depends on Cys-168, which acts as the Nucleophile.

The protein belongs to the isochorismatase family. RutB subfamily.

It carries out the reaction (Z)-3-ureidoacrylate + H2O + H(+) = (Z)-3-aminoacrylate + NH4(+) + CO2. It catalyses the reaction (Z)-3-ureidoacrylate + H2O = (Z)-3-aminoacrylate + carbamate + H(+). The enzyme catalyses (Z)-2-methylureidoacrylate + H2O + H(+) = (Z)-2-methylaminoacrylate + NH4(+) + CO2. Hydrolyzes ureidoacrylate to form aminoacrylate and carbamate. The carbamate hydrolyzes spontaneously, thereby releasing one of the nitrogen atoms of the pyrimidine ring as ammonia and one of its carbon atoms as CO2. This is Ureidoacrylate amidohydrolase RutB from Cronobacter turicensis (strain DSM 18703 / CCUG 55852 / LMG 23827 / z3032).